We begin with the raw amino-acid sequence, 66 residues long: Large ribosomal subunit protein bL35 (66 aa).

Over residues 18 to 27 (ATGKIKSTQS) the composition is skewed to polar residues. Residues 18–41 (ATGKIKSTQSAKRHGMTKRSKRSI) form a disordered region. Residues 28–41 (AKRHGMTKRSKRSI) show a composition bias toward basic residues.

This sequence belongs to the bacterial ribosomal protein bL35 family.

This is Large ribosomal subunit protein bL35 from Ehrlichia ruminantium (strain Gardel).